The primary structure comprises 142 residues: MKTFSAKGHEVQRDWFVIDATDKVLGRVASEVALRLRGKHKPEFTPHVDTGDFIVVINAGKLRVTGTKATEKTYYRHSGYPGGIYETNFLKMQQRFPGRALEKAVKGMLPKGPLGYAMIKKLKVYAEATHPHAAQQPKALEL.

This sequence belongs to the universal ribosomal protein uL13 family. As to quaternary structure, part of the 50S ribosomal subunit.

Its function is as follows. This protein is one of the early assembly proteins of the 50S ribosomal subunit, although it is not seen to bind rRNA by itself. It is important during the early stages of 50S assembly. The polypeptide is Large ribosomal subunit protein uL13 (Janthinobacterium sp. (strain Marseille) (Minibacterium massiliensis)).